Here is a 100-residue protein sequence, read N- to C-terminus: C-X-C motif chemokine 11 (100 aa).

Positions M1 to G21 are cleaved as a signal peptide. 2 cysteine pairs are disulfide-bonded: C30/C57 and C32/C74.

It belongs to the intercrine alpha (chemokine CxC) family. In terms of assembly, interacts with TNFAIP6 (via Link domain).

The protein resides in the secreted. Functionally, chemotactic for interleukin-activated T-cells but not unstimulated T-cells, neutrophils or monocytes. Induces calcium release in activated T-cells. Binds to CXCR3. May play an important role in CNS diseases which involve T-cell recruitment. May play a role in skin immune responses. The protein is C-X-C motif chemokine 11 (Cxcl11) of Mus musculus (Mouse).